A 238-amino-acid chain; its full sequence is Uridylate kinase (238 aa).

12-15 (KLSG) provides a ligand contact to ATP. Residues 20-25 (GEKGFG) form an involved in allosteric activation by GTP region. UMP is bound at residue Gly-54. The ATP site is built by Gly-55 and Arg-59. Residues Asp-72 and 133-140 (TGNPYFST) each bind UMP. Tyr-166 and Asp-169 together coordinate ATP.

It belongs to the UMP kinase family. In terms of assembly, homohexamer.

It is found in the cytoplasm. The catalysed reaction is UMP + ATP = UDP + ADP. Its pathway is pyrimidine metabolism; CTP biosynthesis via de novo pathway; UDP from UMP (UMPK route): step 1/1. Its activity is regulated as follows. Allosterically activated by GTP. Inhibited by UTP. Its function is as follows. Catalyzes the reversible phosphorylation of UMP to UDP. This chain is Uridylate kinase, found in Clostridium botulinum (strain Hall / ATCC 3502 / NCTC 13319 / Type A).